The following is a 429-amino-acid chain: Carbamoyl phosphate synthase arginine-specific small chain (429 aa).

A mitochondrion-targeting transit peptide spans 1 to 20; the sequence is MIRVIQPPLIASKQLFRRYL. A Glutamine amidotransferase type-1 domain is found at 218-406; it reads HIAVLDCGAK…FENIEQYRAT (189 aa). Catalysis depends on C295, which acts as the Nucleophile. Catalysis depends on residues H379 and E381.

Belongs to the CarA family. Heterodimer composed of 2 chains; the small (or glutamine) chain promotes the hydrolysis of glutamine to ammonia, which is used by the large (or ammonia) chain to synthesize carbamoyl phosphate.

It localises to the mitochondrion matrix. It catalyses the reaction hydrogencarbonate + L-glutamine + 2 ATP + H2O = carbamoyl phosphate + L-glutamate + 2 ADP + phosphate + 2 H(+). The catalysed reaction is L-glutamine + H2O = L-glutamate + NH4(+). Its pathway is amino-acid biosynthesis; L-arginine biosynthesis; carbamoyl phosphate from bicarbonate: step 1/1. Functionally, small subunit of the arginine-specific carbamoyl phosphate synthase (CPSase). CPSase catalyzes the formation of carbamoyl phosphate from the ammonia moiety of glutamine, carbonate, and phosphate donated by ATP, the first step of the arginine biosynthetic pathway. The small subunit (glutamine amidotransferase) binds and cleaves glutamine to supply the large subunit with the substrate ammonia. The sequence is that of Carbamoyl phosphate synthase arginine-specific small chain (CPA1) from Debaryomyces hansenii (strain ATCC 36239 / CBS 767 / BCRC 21394 / JCM 1990 / NBRC 0083 / IGC 2968) (Yeast).